Here is a 163-residue protein sequence, read N- to C-terminus: MALNLQDKQAIVAEVNEAAKGALSAVIADSRGVTVEKMTELRKSAREAGVTMRVVRNTLLRRAVEGTDYECLKDTFVGPTLIAFSNEHPGARARLFKEFAKANDKFEIKGAAFEGKIQDVEFLATLPTYEEAIARLMGTMKEAAAGKLARTFAALRDKLQEAA.

Belongs to the universal ribosomal protein uL10 family. Part of the ribosomal stalk of the 50S ribosomal subunit. The N-terminus interacts with L11 and the large rRNA to form the base of the stalk. The C-terminus forms an elongated spine to which L12 dimers bind in a sequential fashion forming a multimeric L10(L12)X complex.

Forms part of the ribosomal stalk, playing a central role in the interaction of the ribosome with GTP-bound translation factors. The polypeptide is Large ribosomal subunit protein uL10 (rplJ) (Haemophilus influenzae (strain ATCC 51907 / DSM 11121 / KW20 / Rd)).